A 215-amino-acid polypeptide reads, in one-letter code: 3,4-dihydroxy-2-butanone 4-phosphate synthase (215 aa).

D-ribulose 5-phosphate is bound by residues 38 to 39 (RE), Asp-43, 151 to 155 (RRGHT), and Glu-175. Position 39 (Glu-39) interacts with Mg(2+). His-154 provides a ligand contact to Mg(2+).

Belongs to the DHBP synthase family. As to quaternary structure, homodimer. The cofactor is Mg(2+). Requires Mn(2+) as cofactor.

The catalysed reaction is D-ribulose 5-phosphate = (2S)-2-hydroxy-3-oxobutyl phosphate + formate + H(+). Its pathway is cofactor biosynthesis; riboflavin biosynthesis; 2-hydroxy-3-oxobutyl phosphate from D-ribulose 5-phosphate: step 1/1. In terms of biological role, catalyzes the conversion of D-ribulose 5-phosphate to formate and 3,4-dihydroxy-2-butanone 4-phosphate. The sequence is that of 3,4-dihydroxy-2-butanone 4-phosphate synthase from Haemophilus influenzae (strain PittGG).